A 200-amino-acid chain; its full sequence is ATP synthase subunit s, mitochondrial (200 aa).

A mitochondrion-targeting transit peptide spans 1–25; it reads MMPFGKISQQLCGVKKLPWSCDSRY. The interval 1–61 is N-terminal domain; that stretch reads MMPFGKISQQ…SEWLLRCGAM (61 aa). A Mg(2+)-binding site is contributed by Gly-59. LRR repeat units follow at residues 62-87, 88-116, 117-141, and 142-173; these read VRYH…KYKI, QAID…KIRL, CKCH…KTIL, and EMEI…LSDL. Thr-93 contacts Mg(2+).

It belongs to the ATP synthase subunit s family. In terms of assembly, homotetramer. Associates with ATP synthase.

The protein resides in the mitochondrion. Its subcellular location is the mitochondrion inner membrane. Functionally, involved in regulation of mitochondrial membrane ATP synthase. Necessary for H(+) conduction of ATP synthase. Facilitates energy-driven catalysis of ATP synthesis by blocking a proton leak through an alternative proton exit pathway. The chain is ATP synthase subunit s, mitochondrial from Homo sapiens (Human).